A 381-amino-acid chain; its full sequence is Cytochrome b (381 aa).

The next 4 helical transmembrane spans lie at 33 to 53, 77 to 98, 113 to 133, and 178 to 198; these read FGSL…FLAM, WLIR…FLHV, WNIG…GYVL, and FFAL…VHLT. Residues His83 and His97 each contribute to the heme b site. Heme b is bound by residues His182 and His196. Position 201 (His201) interacts with a ubiquinone. The next 4 membrane-spanning stretches (helical) occupy residues 226–246, 288–308, 320–340, and 347–367; these read IKDI…ALFS, LGGV…PFLH, ISQT…WIGG, and FIII…HPMP.

It belongs to the cytochrome b family. In terms of assembly, the cytochrome bc1 complex contains 11 subunits: 3 respiratory subunits (MT-CYB, CYC1 and UQCRFS1), 2 core proteins (UQCRC1 and UQCRC2) and 6 low-molecular weight proteins (UQCRH/QCR6, UQCRB/QCR7, UQCRQ/QCR8, UQCR10/QCR9, UQCR11/QCR10 and a cleavage product of UQCRFS1). This cytochrome bc1 complex then forms a dimer. Heme b is required as a cofactor.

The protein resides in the mitochondrion inner membrane. In terms of biological role, component of the ubiquinol-cytochrome c reductase complex (complex III or cytochrome b-c1 complex) that is part of the mitochondrial respiratory chain. The b-c1 complex mediates electron transfer from ubiquinol to cytochrome c. Contributes to the generation of a proton gradient across the mitochondrial membrane that is then used for ATP synthesis. The polypeptide is Cytochrome b (MT-CYB) (Sminthopsis youngsoni (Lesser hairy-footed dunnart)).